Reading from the N-terminus, the 112-residue chain is T cell receptor alpha variable 34 (112 aa).

An N-terminal signal peptide occupies residues 1-21 (METVLQVLLGILGFQAAWVSS). Positions 22 to 112 (QELEQSPQSL…HAGIYLCGAD (91 aa)) constitute an Ig-like domain. N38 and N42 each carry an N-linked (GlcNAc...) asparagine glycan. C43 and C109 form a disulfide bridge.

As to quaternary structure, alpha-beta TR is a heterodimer composed of an alpha and beta chain; disulfide-linked. The alpha-beta TR is associated with the transmembrane signaling CD3 coreceptor proteins to form the TR-CD3 (TcR or TCR). The assembly of alpha-beta TR heterodimers with CD3 occurs in the endoplasmic reticulum where a single alpha-beta TR heterodimer associates with one CD3D-CD3E heterodimer, one CD3G-CD3E heterodimer and one CD247 homodimer forming a stable octameric structure. CD3D-CD3E and CD3G-CD3E heterodimers preferentially associate with TR alpha and TR beta chains, respectively. The association of the CD247 homodimer is the last step of TcR assembly in the endoplasmic reticulum and is required for transport to the cell surface.

The protein localises to the cell membrane. In terms of biological role, v region of the variable domain of T cell receptor (TR) alpha chain that participates in the antigen recognition. Alpha-beta T cell receptors are antigen specific receptors which are essential to the immune response and are present on the cell surface of T lymphocytes. Recognize peptide-major histocompatibility (MH) (pMH) complexes that are displayed by antigen presenting cells (APC), a prerequisite for efficient T cell adaptive immunity against pathogens. Binding of alpha-beta TR to pMH complex initiates TR-CD3 clustering on the cell surface and intracellular activation of LCK that phosphorylates the ITAM motifs of CD3G, CD3D, CD3E and CD247 enabling the recruitment of ZAP70. In turn ZAP70 phosphorylates LAT, which recruits numerous signaling molecules to form the LAT signalosome. The LAT signalosome propagates signal branching to three major signaling pathways, the calcium, the mitogen-activated protein kinase (MAPK) kinase and the nuclear factor NF-kappa-B (NF-kB) pathways, leading to the mobilization of transcription factors that are critical for gene expression and essential for T cell growth and differentiation. The T cell repertoire is generated in the thymus, by V-(D)-J rearrangement. This repertoire is then shaped by intrathymic selection events to generate a peripheral T cell pool of self-MH restricted, non-autoaggressive T cells. Post-thymic interaction of alpha-beta TR with the pMH complexes shapes TR structural and functional avidity. This Homo sapiens (Human) protein is T cell receptor alpha variable 34.